The primary structure comprises 316 residues: Exonuclease DPD1, chloroplastic/mitochondrial (316 aa).

A chloroplast and mitochondrion-targeting transit peptide spans 1 to 63; the sequence is MCISISQVSR…NVSTTTQGSR (63 aa). Residues 112 to 282 form the Exonuclease domain; the sequence is IVSDLETTGL…SDVLLLSKVF (171 aa). The Mg(2+) site is built by aspartate 115 and glutamate 117. The Proton donor/acceptor role is filled by histidine 269. Aspartate 274 is a Mg(2+) binding site.

The protein belongs to the exonuclease superfamily. TREX family. Mg(2+) serves as cofactor. Highly expressed in mature pollen grains. Detected in flowers, senescing leaves and roots.

The protein localises to the plastid. The protein resides in the chloroplast. It localises to the mitochondrion. Inhibited by free nucleotide diphosphates (NDPs). Functionally, exonuclease required for organelle DNA degradation during pollen development. Plays non-essential roles in maternal inheritance. May be part of the DNA salvage machinery. The chain is Exonuclease DPD1, chloroplastic/mitochondrial from Arabidopsis thaliana (Mouse-ear cress).